Reading from the N-terminus, the 108-residue chain is Peptidyl-prolyl cis-trans isomerase FKBP1C (108 aa).

The 89-residue stretch at 20-108 folds into the PPIase FKBP-type domain; that stretch reads SQTCVMHYTG…VFDVELLKLE (89 aa).

Belongs to the FKBP-type PPIase family. FKBP1 subfamily.

It catalyses the reaction [protein]-peptidylproline (omega=180) = [protein]-peptidylproline (omega=0). Catalyzes the cis-trans isomerization of proline imidic peptide bonds in oligopeptides. This is Peptidyl-prolyl cis-trans isomerase FKBP1C from Homo sapiens (Human).